A 292-amino-acid chain; its full sequence is uncharacterized protein (292 aa).

Belongs to the glycosyltransferase 2 family. WaaE/KdtX subfamily.

This is an uncharacterized protein from Rickettsia prowazekii (strain Madrid E).